The following is a 34-amino-acid chain: Mu-theraphotoxin-CCy1a (34 aa).

Intrachain disulfides connect Cys-3/Cys-18, Cys-10/Cys-23, and Cys-17/Cys-30.

It belongs to the neurotoxin 10 (Hwtx-1) family. 14 (Hntx-1) subfamily. As to expression, expressed by the venom gland.

The protein localises to the secreted. Its function is as follows. Voltage-gated sodium channel Nav1.7/SCN9A inhibitor. The chain is Mu-theraphotoxin-CCy1a from Chromatopelma cyaneopubescens (Greenbottle blue tarantula).